The chain runs to 555 residues: Adenine deaminase (555 aa).

The protein belongs to the metallo-dependent hydrolases superfamily. Adenine deaminase family. Mn(2+) is required as a cofactor.

It catalyses the reaction adenine + H2O + H(+) = hypoxanthine + NH4(+). In Methanosarcina mazei (strain ATCC BAA-159 / DSM 3647 / Goe1 / Go1 / JCM 11833 / OCM 88) (Methanosarcina frisia), this protein is Adenine deaminase.